The sequence spans 167 residues: Caffeine dehydrogenase subunit gamma (167 aa).

Residues 4 to 80 enclose the 2Fe-2S ferredoxin-type domain; that stretch reads HVISLTVNGQ…GHSIRTVEAL (77 aa). Residues Cys-42, Cys-47, Cys-50, and Cys-62 each contribute to the [2Fe-2S] cluster site.

In terms of assembly, heterotrimer composed of an alpha (CdhA), a beta (CdhB) and a gamma (CdhC) subunit.

It carries out the reaction caffeine + a ubiquinone + H2O = 1,3,7-trimethylurate + a ubiquinol. It catalyses the reaction ubiquinone-0 + caffeine + H2O = ubiquinol-0 + 1,3,7-trimethylurate. The catalysed reaction is theobromine + a ubiquinone + H2O = 3,7-dimethylurate + a ubiquinol. Component of the caffeine dehydrogenase complex that catalyzes the hydrolytical oxidation of 1,3,7-trimethylxanthine (caffeine) by incorporation of an oxygen atom originating from a water molecule into position C-8 to produce 1,3,7-trimethyluric acid (TMU). Coenzyme Q0 (ubiquinone-0) is the preferred electron acceptor and, to a lesser extent, coenzyme Q2 (ubiquinone-2) can also be used, but oxygen and NAD(P)(+) cannot. Is involved in a caffeine degradation pathway that allows Pseudomonas sp. strain CBB1 to grow on caffeine as the sole carbon and nitrogen source. Is also active with theobromine as substrate, but shows a very poor activity with theophylline and is not active with xanthine, 3-methylxanthine, 7-methylxanthine, TMU, and 3,7-dimethylurate. The sequence is that of Caffeine dehydrogenase subunit gamma from Pseudomonas sp. (strain CBB1).